A 217-amino-acid polypeptide reads, in one-letter code: MSKITSSGVRENVHKLLEYSTETKKRNFLETVELQVGLKNYDPQRDKRFSGTLKLPQVPRPNMTICIFGDAFDVDRAKSLGVDAMSVDDLKKLNKNKKLIKKLAKKYNAFIASEVLIKQIPRLLGPTLSKAGKFPTPVSHNDDLYSKVTDVKSTIKFQLKKVLCLAVAVGNVDMEEDVLVNQIMMAANFLVSLLKKNWQNVGSLVIKSTMGPSFRIY.

This sequence belongs to the universal ribosomal protein uL1 family. In terms of assembly, component of the large ribosomal subunit (LSU). Mature ribosomes consist of a small (40S) and a large (60S) subunit. The 40S subunit contains about 32 different proteins and 1 molecule of RNA (18S). The 60S subunit contains 45 different proteins and 3 molecules of RNA (25S, 5.8S and 5S). uL1 forms part of the L1 stalk.

The protein resides in the cytoplasm. Its function is as follows. Component of the ribosome, a large ribonucleoprotein complex responsible for the synthesis of proteins in the cell. The small ribosomal subunit (SSU) binds messenger RNAs (mRNAs) and translates the encoded message by selecting cognate aminoacyl-transfer RNA (tRNA) molecules. The large subunit (LSU) contains the ribosomal catalytic site termed the peptidyl transferase center (PTC), which catalyzes the formation of peptide bonds, thereby polymerizing the amino acids delivered by tRNAs into a polypeptide chain. The nascent polypeptides leave the ribosome through a tunnel in the LSU and interact with protein factors that function in enzymatic processing, targeting, and the membrane insertion of nascent chains at the exit of the ribosomal tunnel. uL1 forms part of the L1 stalk, a mobile element that plays a role in evacuating the exit-site tRNA. The protein is Large ribosomal subunit protein uL1 (RPL10A) of Candida albicans (strain SC5314 / ATCC MYA-2876) (Yeast).